Consider the following 872-residue polypeptide: Alanine--tRNA ligase (872 aa).

Zn(2+)-binding residues include histidine 567, histidine 571, cysteine 669, and histidine 673.

Belongs to the class-II aminoacyl-tRNA synthetase family. The cofactor is Zn(2+).

It is found in the cytoplasm. The catalysed reaction is tRNA(Ala) + L-alanine + ATP = L-alanyl-tRNA(Ala) + AMP + diphosphate. In terms of biological role, catalyzes the attachment of alanine to tRNA(Ala) in a two-step reaction: alanine is first activated by ATP to form Ala-AMP and then transferred to the acceptor end of tRNA(Ala). Also edits incorrectly charged Ser-tRNA(Ala) and Gly-tRNA(Ala) via its editing domain. The protein is Alanine--tRNA ligase of Streptococcus pyogenes serotype M18 (strain MGAS8232).